Here is a 401-residue protein sequence, read N- to C-terminus: Probable tRNA sulfurtransferase (401 aa).

Positions 60-165 (EPIIDKLKNV…QEGTYITCHD (106 aa)) constitute a THUMP domain. ATP contacts are provided by residues 183-184 (ML), 208-209 (HF), arginine 265, glycine 287, and glutamine 296.

This sequence belongs to the ThiI family.

It localises to the cytoplasm. The enzyme catalyses [ThiI sulfur-carrier protein]-S-sulfanyl-L-cysteine + a uridine in tRNA + 2 reduced [2Fe-2S]-[ferredoxin] + ATP + H(+) = [ThiI sulfur-carrier protein]-L-cysteine + a 4-thiouridine in tRNA + 2 oxidized [2Fe-2S]-[ferredoxin] + AMP + diphosphate. The catalysed reaction is [ThiS sulfur-carrier protein]-C-terminal Gly-Gly-AMP + S-sulfanyl-L-cysteinyl-[cysteine desulfurase] + AH2 = [ThiS sulfur-carrier protein]-C-terminal-Gly-aminoethanethioate + L-cysteinyl-[cysteine desulfurase] + A + AMP + 2 H(+). It participates in cofactor biosynthesis; thiamine diphosphate biosynthesis. Its function is as follows. Catalyzes the ATP-dependent transfer of a sulfur to tRNA to produce 4-thiouridine in position 8 of tRNAs, which functions as a near-UV photosensor. Also catalyzes the transfer of sulfur to the sulfur carrier protein ThiS, forming ThiS-thiocarboxylate. This is a step in the synthesis of thiazole, in the thiamine biosynthesis pathway. The sulfur is donated as persulfide by IscS. The protein is Probable tRNA sulfurtransferase of Geobacillus sp. (strain WCH70).